Reading from the N-terminus, the 305-residue chain is Ornithine carbamoyltransferase (305 aa).

Carbamoyl phosphate-binding positions include 54-57 (STRT), Gln-81, Arg-105, and 132-135 (HPCQ). L-ornithine-binding positions include Asn-163, Asp-223, and 227 to 228 (SM). Residues 262–263 (CL) and Arg-290 each bind carbamoyl phosphate.

The protein belongs to the aspartate/ornithine carbamoyltransferase superfamily. OTCase family.

The protein resides in the cytoplasm. It catalyses the reaction carbamoyl phosphate + L-ornithine = L-citrulline + phosphate + H(+). It functions in the pathway amino-acid biosynthesis; L-arginine biosynthesis; L-arginine from L-ornithine and carbamoyl phosphate: step 1/3. Functionally, reversibly catalyzes the transfer of the carbamoyl group from carbamoyl phosphate (CP) to the N(epsilon) atom of ornithine (ORN) to produce L-citrulline. The polypeptide is Ornithine carbamoyltransferase (Agrobacterium fabrum (strain C58 / ATCC 33970) (Agrobacterium tumefaciens (strain C58))).